The chain runs to 691 residues: MPRQFPLNKTRNIGIMAHIDAGKTTTTERILFYTGRVHKIGEVHDGAATMDWMVQEQERGITITSAATTCQWRGHRINIIDTPGHVDFTVEVERSLRVLDGAVAVFCSVGGVEPQSETVWRQADKYGVPRIAYINKMDRIGADFFRGVSMIRERLGANPVPIQIPIGAEDQFKGIVDLITMKAIIYVDDLGKTSDVTEIPEDLADIAAEYREKLLEAVAESDEELMMKYLEGEELTEEEIRNGIRKSTLAVKMIPVLCGSSFKNKGVQPLLDAVVEFLPAPVDIPAVKGVNPDSGEEDVREVSDEEPFSTLAFKIMADPYVGKLAFFRVYSGKLSSGSYVYNSTKGKKERIGRILQMHANHREEIAEVYTGDIAAAVGLKDTTTGDTLCDEKHPIILESMQFPEPVIHVAIEPKTKADQDKMAIALQRLSEEDPTFRMSTDHETGQTIISGMGELHLEIIVDRMMREFKVEANVGRPQVAYKETIRSKAKAEGKFVRQSGGRGQYGHAVIEIEPLEPGAGYEFVNKIVGGVIPREYIPAIDNGIREAAETGVLAGYPTVDFRVTLVFGSYHDVDSSEMAFKIAGSMAFKEGAAKANPVILEPVMKVEVTVPEEYMGDVIGDINSRRGRIEGMESRGSTQVVRGYVPLSEMFGYATDLRSRTQGRGQYVMMYSHNEEVPRNIAEGIIAKRKG.

The 275-residue stretch at 8-282 folds into the tr-type G domain; the sequence is NKTRNIGIMA…AVVEFLPAPV (275 aa). GTP contacts are provided by residues 17 to 24, 81 to 85, and 135 to 138; these read AHIDAGKT, DTPGH, and NKMD.

It belongs to the TRAFAC class translation factor GTPase superfamily. Classic translation factor GTPase family. EF-G/EF-2 subfamily.

It localises to the cytoplasm. In terms of biological role, catalyzes the GTP-dependent ribosomal translocation step during translation elongation. During this step, the ribosome changes from the pre-translocational (PRE) to the post-translocational (POST) state as the newly formed A-site-bound peptidyl-tRNA and P-site-bound deacylated tRNA move to the P and E sites, respectively. Catalyzes the coordinated movement of the two tRNA molecules, the mRNA and conformational changes in the ribosome. The polypeptide is Elongation factor G (Heliobacterium modesticaldum (strain ATCC 51547 / Ice1)).